A 317-amino-acid chain; its full sequence is MEIRAPPTSLRLAPPPPASASFRRTALRTSFLNGSVSLRLIQVRQSNVNRFKCNGIRSNLLDRFSRVVKSYANAVLSSFEDPEKILDQAVLEMNDDLTKMRQATAQVLASQKRLENKYKAAEQASDDWYRRAQLALQKGDEDLAREALKRRKSYADNASSLKAQLDQQKGVVENLVSNTRVLESKIAEAKQKKDTLKARAQSAKTSTKVSEMLGNVNTSGALSAFEKMEEKVMAMESQAEALGQLATDDLEGKFALLETSSVDDDLAQMKKEISGSSSKGELPPGRTAVSNSGAARPFRDIEIENELNELRKKANEY.

Residues 92-246 are a coiled coil; it reads EMNDDLTKMR…SQAEALGQLA (155 aa). The segment at 265–317 is disordered; sequence DLAQMKKEISGSSSKGELPPGRTAVSNSGAARPFRDIEIENELNELRKKANEY. Over residues 297–317 the composition is skewed to basic and acidic residues; the sequence is PFRDIEIENELNELRKKANEY.

The protein belongs to the PspA/Vipp/IM30 family. As to quaternary structure, homomultimer. Complex formation involves interaction via the central alpha-helical domain (71-286). (Microbial infection) Interacts with the rice tungro bacilliform virus (RTBV) capsid protein.

The protein localises to the plastid. It localises to the chloroplast inner membrane. The protein resides in the chloroplast thylakoid membrane. In terms of biological role, required for plastid vesicle formation and thylakoid membrane biogenesis, but not for functional assembly of thylakoid protein complexes. The chain is Membrane-associated protein VIPP1, chloroplastic from Oryza sativa subsp. japonica (Rice).